The following is a 346-amino-acid chain: Lipooligosaccharide heptosyltransferase 2 (346 aa).

This sequence belongs to the glycosyltransferase 9 family.

The enzyme catalyses an L-alpha-D-Hep-(1-&gt;5)-[alpha-Kdo-(2-&gt;4)]-alpha-Kdo-(2-&gt;6)-lipid A + ADP-L-glycero-beta-D-manno-heptose = an L-alpha-D-Hep-(1-&gt;3)-L-alpha-D-Hep-(1-&gt;5)-[alpha-Kdo-(2-&gt;4)]-alpha-Kdo-(2-&gt;6)-lipid A + ADP + H(+). Its pathway is bacterial outer membrane biogenesis; LOS core biosynthesis. In terms of biological role, glycosyltransferase involved in the biosynthesis of the core oligosaccharide region of lipooligosaccharide (LOS). Catalyzes the addition of a heptose unit to the heptosyl-Kdo2-lipid A module. The chain is Lipooligosaccharide heptosyltransferase 2 (waaF) from Haemophilus influenzae (strain ATCC 51907 / DSM 11121 / KW20 / Rd).